The sequence spans 619 residues: ATP-dependent zinc metalloprotease FtsH (619 aa).

The Cytoplasmic portion of the chain corresponds to 1–11 (MDKQSKFRIKT). Residues 12-32 (FFKKIIFFLIIFCFFYFFNFI) traverse the membrane as a helical segment. At 33-131 (KKTKKITHTT…FKNYKIYTVL (99 aa)) the chain is on the periplasmic side. Residues 132-152 (NFFYDYGFFLMIIIICWIFIF) form a helical membrane-spanning segment. Over 153-619 (RKIASRSSES…FKEDFASILD (467 aa)) the chain is Cytoplasmic. Position 224–231 (224–231 (GPPGTGKT)) interacts with ATP. Histidine 447 contributes to the Zn(2+) binding site. Glutamate 448 is a catalytic residue. The Zn(2+) site is built by histidine 451 and aspartate 522.

This sequence in the central section; belongs to the AAA ATPase family. It in the C-terminal section; belongs to the peptidase M41 family. Homohexamer. The cofactor is Zn(2+).

The protein resides in the cell inner membrane. Acts as a processive, ATP-dependent zinc metallopeptidase for both cytoplasmic and membrane proteins. Plays a role in the quality control of integral membrane proteins. In Karelsulcia muelleri (strain DMIN) (Sulcia muelleri), this protein is ATP-dependent zinc metalloprotease FtsH.